Consider the following 592-residue polypeptide: Sodium- and chloride-dependent transporter XTRP3A (592 aa).

The Cytoplasmic portion of the chain corresponds to 1 to 7; it reads MEKARPQ. Residues 8 to 28 form a helical membrane-spanning segment; that stretch reads WGHPLQFVFACISYAVGLGNV. Residues 29–42 are Extracellular-facing; it reads WRFPYLCQMYGGGS. The chain crosses the membrane as a helical span at residues 43–63; sequence FLVPYIIMLIVEGMPLLYLEL. The Cytoplasmic segment spans residues 64-79; that stretch reads AVGQRMRQGSIGAWRT. The helical transmembrane segment at 80–100 threads the bilayer; the sequence is ISPYLSGVGVASVVVSFFLSM. The Extracellular portion of the chain corresponds to 101-165; the sequence is YYNVINAWGF…ISPSIQENGG (65 aa). N131 carries an N-linked (GlcNAc...) asparagine glycan. Residues 166 to 186 traverse the membrane as a helical segment; that stretch reads VQWEPALCLTLAWLMVYLCIL. The Cytoplasmic segment spans residues 187–194; sequence RGTESTGK. A helical membrane pass occupies residues 195-215; that stretch reads VVYFTASMPYCVLIIYLVRGL. Over 216–241 the chain is Extracellular; it reads TLHGATNGLMYMFTPKMEQLANPKAW. A helical membrane pass occupies residues 242-262; the sequence is INAATQIFFSLGLGFGSLIAF. The Cytoplasmic segment spans residues 263–276; it reads ASYNEPSNNCQKHA. A helical transmembrane segment spans residues 277 to 297; it reads IIVSIINSSTSIFASIVTFSI. Topologically, residues 298–389 are extracellular; sequence YGFKATFNYE…EAIKNMEVSQ (92 aa). Residues 390–410 form a helical membrane-spanning segment; sequence LWSVLYFFMLLMLGIGSMLGN. At 411–431 the chain is on the cytoplasmic side; that stretch reads TAAILTPLTDSKVISSYLPKE. Residues 432–452 form a helical membrane-spanning segment; the sequence is AISGLVCLINCAVGMVFTMEA. Topologically, residues 453 to 465 are extracellular; that stretch reads GNYWFDIFNDYAA. The helical transmembrane segment at 466 to 486 threads the bilayer; that stretch reads TLSLLLIVLVETIAVCYVYGL. The Cytoplasmic segment spans residues 487 to 504; the sequence is KRFESDLRAMTGRTLSWY. A helical membrane pass occupies residues 505-525; the sequence is WKVMWAFVSPLLIVGLFIFYL. At 526-554 the chain is on the extracellular side; that stretch reads SDYILTGTLQYQAWDATQGQLVTKDYPPH. The helical transmembrane segment at 555–575 threads the bilayer; sequence ALAVIGLLVASSTMCIPLVAL. Residues 576–592 lie on the Cytoplasmic side of the membrane; that stretch reads GTFIRNRLKRGGSAPVA.

Belongs to the sodium:neurotransmitter symporter (SNF) (TC 2.A.22) family. SLC6A20 subfamily. In terms of tissue distribution, expressed in brain, kidney, small intestine, thymus, spleen and lung. In the brain, expressed in cerebellum, cortex and brain stem. Not detected in liver, muscle or heart. In brain, widespread in various regions, including the meninges, choroid plexus, cortex, hippocampus and thalamus.

The protein resides in the apical cell membrane. The enzyme catalyses L-proline(out) + chloride(out) + 2 Na(+)(out) = L-proline(in) + chloride(in) + 2 Na(+)(in). It carries out the reaction 4-hydroxy-L-proline(out) + chloride(out) + 2 Na(+)(out) = 4-hydroxy-L-proline(in) + chloride(in) + 2 Na(+)(in). The catalysed reaction is 2-methyl-2-(methylamino)propanoate(out) + chloride(out) + 2 Na(+)(out) = 2-methyl-2-(methylamino)propanoate(in) + chloride(in) + 2 Na(+)(in). It catalyses the reaction L-pipecolate(out) + chloride(out) + 2 Na(+)(out) = L-pipecolate(in) + chloride(in) + 2 Na(+)(in). The enzyme catalyses glycine betaine(out) + chloride(out) + 2 Na(+)(out) = glycine betaine(in) + chloride(in) + 2 Na(+)(in). It carries out the reaction glycine(out) + chloride(out) + 2 Na(+)(out) = glycine(in) + chloride(in) + 2 Na(+)(in). Its function is as follows. Mediates the Na(+)- and Cl(-)-dependent uptake of imino acids such as L-proline, N-methyl-L-proline and pipecolate as well as N-methylated amino acids. Also transports glycine, regulates proline and glycine homeostasis in the brain playing a role in the modulation of NMDAR currents. The polypeptide is Sodium- and chloride-dependent transporter XTRP3A (Mus musculus (Mouse)).